The primary structure comprises 200 residues: Gene 55 protein (200 aa).

The S-palmitoyl cysteine; by host moiety is linked to residue Cys-8.

This sequence belongs to the herpesviridae UL51 family. Oligomerizes. Interacts with ORF42; this interaction mediates ORF42 incorporation to virions. Phosphorylated. Post-translationally, palmitoylation is necessary for Golgi localization.

Its subcellular location is the virion tegument. It localises to the host cytoplasm. It is found in the host Golgi apparatus. Plays several roles during the time course of infection, including egress of virus particles from the perinuclear space and secondary envelopment of cytoplasmic capsids that bud into specific trans-Golgi network (TGN)-derived membranes. The chain is Gene 55 protein (55) from Saimiriine herpesvirus 2 (strain 11) (SaHV-2).